A 200-amino-acid chain; its full sequence is Peptidyl-tRNA hydrolase (200 aa).

Residue Phe-16 coordinates tRNA. His-21 (proton acceptor) is an active-site residue. The tRNA site is built by Phe-67, Asn-69, and Asn-115.

It belongs to the PTH family. Monomer.

The protein localises to the cytoplasm. It carries out the reaction an N-acyl-L-alpha-aminoacyl-tRNA + H2O = an N-acyl-L-amino acid + a tRNA + H(+). Functionally, hydrolyzes ribosome-free peptidyl-tRNAs (with 1 or more amino acids incorporated), which drop off the ribosome during protein synthesis, or as a result of ribosome stalling. Its function is as follows. Catalyzes the release of premature peptidyl moieties from peptidyl-tRNA molecules trapped in stalled 50S ribosomal subunits, and thus maintains levels of free tRNAs and 50S ribosomes. This chain is Peptidyl-tRNA hydrolase, found in Prochlorococcus marinus (strain MIT 9215).